A 614-amino-acid chain; its full sequence is Vitamin B12 transporter BtuB (614 aa).

An N-terminal signal peptide occupies residues 1 to 20 (MIKKASLLTACSVTAFSAWA). The short motif at 26 to 33 (DTLVVTAN) is the TonB box element. Residues 38 to 152 (PRSTVLAPTT…IGGVVNIITT (115 aa)) form the TBDR plug domain. Cyanocob(III)alamin-binding positions include Leu-83, Ser-85, Asn-92, and 110-111 (VS). The TBDR beta-barrel domain occupies 155-614 (EPGTEISAGW…EYTLSGSYTF (460 aa)). The next 3 beta stranded transmembrane spans lie at 158–165 (TEISAGWG), 169–178 (YQNYDVSTQQ), and 184–195 (TRVTLLGDYAHT). Positions 199, 211, 213, and 215 each coordinate Ca(2+). Beta stranded transmembrane passes span 217–227 (FLSKTLYGALE) and 232–248 (DAWS…NRTN). Ca(2+) contacts are provided by Tyr-249 and Asp-250. Position 251 (Ala-251) interacts with cyanocob(III)alamin. Asp-261 serves as a coordination point for Ca(2+). The next 14 beta stranded transmembrane spans lie at 263–277 (RKLY…LRYN), 279–296 (ELIK…KDYN), 309–325 (TLDE…NNVI), 328–337 (HGSIGAGVDW), 353–369 (YDQR…QQVG), 371–381 (FTFEGAARNDD), 385–400 (FGRH…WEFI), 403–417 (YRFI…KAPN), 434–443 (KSKQWEGAFE), 449–458 (VNWRISGYRN), 473–490 (YYNE…TANF), 494–509 (PLTH…ARNA), 517–529 (RRAK…QLDW), and 535–550 (DWGI…YDKD). Thr-309 is a binding site for cyanocob(III)alamin. Arg-517 is a binding site for cyanocob(III)alamin. Tyr-551 is a cyanocob(III)alamin binding site. 3 consecutive transmembrane segments (beta stranded) span residues 558–572 (TVKM…LAVA), 585–596 (IANLFDKDYETV), and 602–614 (AGRE…SYTF). A TonB C-terminal box motif is present at residues 597 to 614 (YGYQTAGREYTLSGSYTF).

Belongs to the TonB-dependent receptor family. BtuB (TC 1.B.14.3.1) subfamily.

The protein resides in the cell outer membrane. Functionally, involved in the active translocation of vitamin B12 (cyanocobalamin) across the outer membrane to the periplasmic space. It derives its energy for transport by interacting with the trans-periplasmic membrane protein TonB. In Escherichia coli O139:H28 (strain E24377A / ETEC), this protein is Vitamin B12 transporter BtuB.